The sequence spans 206 residues: Large ribosomal subunit protein uL4 (206 aa).

The segment at 42–93 is disordered; the sequence is KKQQGTHKTKNRSEVSRTGAKMYKQKGTGRARHHSARAPQFRGGGKAHGPVV. Basic residues predominate over residues 64-77; it reads YKQKGTGRARHHSA.

It belongs to the universal ribosomal protein uL4 family. In terms of assembly, part of the 50S ribosomal subunit.

One of the primary rRNA binding proteins, this protein initially binds near the 5'-end of the 23S rRNA. It is important during the early stages of 50S assembly. It makes multiple contacts with different domains of the 23S rRNA in the assembled 50S subunit and ribosome. Its function is as follows. Forms part of the polypeptide exit tunnel. The polypeptide is Large ribosomal subunit protein uL4 (Agrobacterium fabrum (strain C58 / ATCC 33970) (Agrobacterium tumefaciens (strain C58))).